A 375-amino-acid chain; its full sequence is PqqA peptide cyclase (375 aa).

One can recognise a Radical SAM core domain in the interval 18–235; that stretch reads ILPPMAMLAE…EAREKYQGIL (218 aa). Residues Cys-32, Cys-36, and Cys-39 each coordinate [4Fe-4S] cluster.

This sequence belongs to the radical SAM superfamily. PqqE family. As to quaternary structure, interacts with PqqD. The interaction is necessary for activity of PqqE. [4Fe-4S] cluster serves as cofactor.

The enzyme catalyses [PQQ precursor protein] + S-adenosyl-L-methionine = E-Y cross-linked-[PQQ precursor protein] + 5'-deoxyadenosine + L-methionine + H(+). Its pathway is cofactor biosynthesis; pyrroloquinoline quinone biosynthesis. Functionally, catalyzes the cross-linking of a glutamate residue and a tyrosine residue in the PqqA protein as part of the biosynthesis of pyrroloquinoline quinone (PQQ). This is PqqA peptide cyclase from Rhizobium meliloti (strain 1021) (Ensifer meliloti).